The following is a 633-amino-acid chain: Chaperone protein DnaK (633 aa).

Residue Thr-198 is modified to Phosphothreonine; by autocatalysis.

This sequence belongs to the heat shock protein 70 family.

In terms of biological role, acts as a chaperone. The sequence is that of Chaperone protein DnaK from Rhodopseudomonas palustris (strain BisA53).